Consider the following 318-residue polypeptide: Mitochondrial coenzyme A transporter SLC25A42 (318 aa).

Solcar repeat units lie at residues 31–117, 129–214, and 224–312; these read RQVL…YKRI, LPPW…LKSL, and PYPF…MQIL. 6 consecutive transmembrane segments (helical) span residues 33–53, 89–109, 135–155, 186–206, 230–250, and 293–313; these read VLSS…AVAP, LWRG…IQFS, LLAG…LDLV, LYFG…LSFF, MVFG…LDVV, and LKGP…QILL.

Belongs to the mitochondrial carrier (TC 2.A.29) family. Widely expressed. Highly expressed in adipose, followed by hypothalamus and brain coronal sections containing corpus callosum, fornix, thalamus, hypothalamus, optic chiasm, pons, midbrain, and cerebellum.

The protein localises to the mitochondrion inner membrane. The catalysed reaction is ADP(out) + CoA(in) = ADP(in) + CoA(out). The enzyme catalyses 3'-dephospho-CoA(in) + ADP(out) = 3'-dephospho-CoA(out) + ADP(in). It carries out the reaction adenosine 3',5'-bisphosphate(in) + ADP(out) = adenosine 3',5'-bisphosphate(out) + ADP(in). It catalyses the reaction AMP(in) + ADP(out) = AMP(out) + ADP(in). The catalysed reaction is dADP(in) + ADP(out) = dADP(out) + ADP(in). The enzyme catalyses ADP(in) + ATP(out) = ADP(out) + ATP(in). Functionally, mitochondrial carrier mediating the transport of coenzyme A (CoA) in mitochondria in exchange for intramitochondrial (deoxy)adenine nucleotides and adenosine 3',5'-diphosphate. This chain is Mitochondrial coenzyme A transporter SLC25A42 (Slc25a42), found in Rattus norvegicus (Rat).